A 219-amino-acid chain; its full sequence is Multiple organellar RNA editing factor 2, chloroplastic (219 aa).

Residues 1 to 48 constitute a chloroplast transit peptide; it reads MALPLSGTRHLTRALLSNVTLMAPPRIPSSVHYGGSRLGCSTRFFSIR. The tract at residues 182-219 is disordered; that stretch reads VQRSPERQRRVEPQPQRAQDRPRYNDRTRYSRRRENTR. Over residues 185–219 the composition is skewed to basic and acidic residues; it reads SPERQRRVEPQPQRAQDRPRYNDRTRYSRRRENTR.

It belongs to the MORF family. Homodimer and heterodimer with MORF9. Interacts with protoporphyrinogen oxidase 1 PPOX1. Heterodimers with MORF8/RIP1 and MORF9/RIP9. Interacts with PCMP-A2/PMD1. Interacts with ORRM1. Interacts with ORRM6.

The protein localises to the plastid. Its subcellular location is the chloroplast. In terms of biological role, involved in plastid rRNA processing and consequently in translation and early chloroplast differentiation. Involved in organellar RNA editing. Required for the processing of multiple editing sites in plastids. The sequence is that of Multiple organellar RNA editing factor 2, chloroplastic from Arabidopsis thaliana (Mouse-ear cress).